The chain runs to 959 residues: Nucleoporin NUP100/NSP100 (959 aa).

The segment at 1 to 104 (MFGNNRPMFG…NSSNASNGNT (104 aa)) is disordered. 3 FG repeats span residues 2–3 (FG), 9–10 (FG), and glycine 17. The segment covering 12–36 (SNLSFGSNTSSFGGQQSQQPNSLFG) has biased composition (polar residues). An SLFG 1; approximate repeat occupies 21–24 (SSFG). The stretch at 33–36 (SLFG) is one SLFG 2 repeat. The span at 37–48 (NSNNNNNSTSNN) shows a compositional bias: low complexity. Residues 51 to 54 (SGFG) form an SLFG 3; approximate repeat. Composition is skewed to low complexity over residues 56–81 (FTSAAGSNSNSLFGNNNTQNNGAFGQ) and 92–104 (GSLNSSNASNGNT). The SLFG 4 repeat unit spans residues 66 to 69 (SLFG). Residues 77–80 (GAFG) form a GLFG 1; approximate repeat. The SLFG 5; approximate repeat unit spans residues 89-92 (SPFG). The stretch at 105-106 (FG) is one FG 4 repeat. The stretch at 112-115 (GSFG) is one GLFG 2; approximate repeat. The span at 121–136 (AFNNNSNSTNSPFGFN) shows a compositional bias: low complexity. Residues 121 to 172 (AFNNNSNSTNSPFGFNKPNTGGTLFGSQNNNSAGTSSLFGGQSTSTTGTFGN) form a disordered region. The stretch at 131–134 (SPFG) is one SLFG 6; approximate repeat. Positions 137–153 (KPNTGGTLFGSQNNNSA) are enriched in polar residues. The FG 5 repeat unit spans residues 145–146 (FG). The segment covering 154–172 (GTSSLFGGQSTSTTGTFGN) has biased composition (low complexity). An SLFG 7 repeat occupies 157 to 160 (SLFG). The stretch at 168–171 (GTFG) is one GLFG 3; approximate repeat. The stretch at 175–178 (SSFG) is one SLFG 8; approximate repeat. The FG 6 repeat unit spans residues 189–190 (FG). Residues 190-394 (GAGNNSQSNT…NNQQQQSTGL (205 aa)) form a disordered region. Residues 192–245 (GNNSQSNTTGSLFGNQQSSAFGTNNQQGSLFGQQSQNTNNAFGNQNQLGGSSFG) show a composition bias toward polar residues. Residues 202–205 (SLFG) form an SLFG 9 repeat. The SLFG 10; approximate repeat unit spans residues 210 to 213 (SAFG). Residues 220–223 (SLFG) form an SLFG 11 repeat. An FG 7 repeat occupies 233-234 (FG). The stretch at 242 to 245 (SSFG) is one SLFG 12; approximate repeat. Residues 253–256 (SLFG) form an SLFG 13 repeat. The span at 259–293 (NNTLGNTTNNRNGLFGQMNSSNQGSSNSGLFGQNS) shows a compositional bias: low complexity. GLFG repeat units lie at residues 271-274 (GLFG) and 287-290 (GLFG). Positions 294-303 (MNSSTQGVFG) are enriched in polar residues. One copy of the GLFG 6; approximate repeat lies at 300-303 (GVFG). Over residues 304–317 (QNNNQMQINGNNNN) the composition is skewed to low complexity. Residues 318 to 321 (SLFG) form an SLFG 14 repeat. GLFG repeat units lie at residues 333-336 (GLFG), 345-348 (GLFG), 358-361 (GLFG), 379-382 (GLFG), and 393-396 (GLFG). Positions 336 to 352 (GQNNQQQGSGLFGQNSQ) are enriched in low complexity. Polar residues predominate over residues 353–377 (TSGSSGLFGQNNQKQPNTFTQSNTG). SLFG repeat units follow at residues 405–408 (SLFG), 417–420 (SLFG), and 436–439 (SLFG). The FG 8 repeat unit spans residues 448 to 449 (FG). The stretch at 462 to 465 (SLFG) is one SLFG 18 repeat. The stretch at 474-477 (SLFG) is one SLFG 19; approximate repeat. GLFG repeat units lie at residues 490–493 (GLFG), 506–509 (GLFG), and 523–526 (GLFG). The FG 9 repeat unit spans residues 542–543 (FG). Residues 550–553 (GLFG) form a GLFG 15 repeat. The FG 10 repeat unit spans residues 569–570 (FG). Disordered regions lie at residues 672–697 (TLERSDRGSSTSNSITDPESSYLNSN) and 745–794 (DDQA…PMIE). The span at 679 to 697 (GSSTSNSITDPESSYLNSN) shows a compositional bias: polar residues. Basic and acidic residues predominate over residues 757–775 (LTEKAHSPQTDLKDDHDES). Phosphoserine occurs at positions 763 and 783. Polar residues predominate over residues 777–790 (PDPQSKSPNGSTSI). The 143-residue stretch at 814–956 (KNNYYISPSI…GTYSYTIDHP (143 aa)) folds into the Peptidase S59 domain. Positions 816–955 (NYYISPSIET…TGTYSYTIDH (140 aa)) are nucleoporin RNA-binding motif (NRM).

It belongs to the nucleoporin GLFG family. Component of the nuclear pore complex (NPC). NPC constitutes the exclusive means of nucleocytoplasmic transport. NPCs allow the passive diffusion of ions and small molecules and the active, nuclear transport receptor-mediated bidirectional transport of macromolecules such as proteins, RNAs, ribonucleoparticles (RNPs), and ribosomal subunits across the nuclear envelope. Due to its 8-fold rotational symmetry, all subunits are present with 8 copies or multiples thereof. Through its FG repeats NUP100 interacts with numerous karyopherins including KAP95, and MEX67.

It localises to the nucleus. It is found in the nuclear pore complex. The protein resides in the nucleus membrane. Functionally, functions as a component of the nuclear pore complex (NPC). NPC components, collectively referred to as nucleoporins (NUPs), can play the role of both NPC structural components and of docking or interaction partners for transiently associated nuclear transport factors. Active directional transport is assured by both, a Phe-Gly (FG) repeat affinity gradient for these transport factors across the NPC and a transport cofactor concentration gradient across the nuclear envelope (GSP1 and GSP2 GTPases associated predominantly with GTP in the nucleus, with GDP in the cytoplasm). NUP100 plays an important role in several nuclear export and import pathways including poly(A)+ RNA and protein transport. The protein is Nucleoporin NUP100/NSP100 (NUP100) of Saccharomyces cerevisiae (strain ATCC 204508 / S288c) (Baker's yeast).